Consider the following 189-residue polypeptide: Adenylate kinase (189 aa).

Residue 10–15 (AAGKGT) participates in ATP binding. The interval 30-59 (STGDMLRAAIASGSELGQKVKGVLDRGELV) is NMP. AMP contacts are provided by residues threonine 31, arginine 36, 57-59 (ELV), 85-88 (GFPR), and glutamine 92. An LID region spans residues 126 to 136 (KRFAEQGRPDD). Arginine 127 is a binding site for ATP. Positions 133 and 144 each coordinate AMP. Residue alanine 172 participates in ATP binding.

Belongs to the adenylate kinase family. In terms of assembly, monomer.

Its subcellular location is the cytoplasm. The catalysed reaction is AMP + ATP = 2 ADP. It functions in the pathway purine metabolism; AMP biosynthesis via salvage pathway; AMP from ADP: step 1/1. Catalyzes the reversible transfer of the terminal phosphate group between ATP and AMP. Plays an important role in cellular energy homeostasis and in adenine nucleotide metabolism. This Caulobacter sp. (strain K31) protein is Adenylate kinase.